The chain runs to 249 residues: Large ribosomal subunit protein uL16m (249 aa).

It belongs to the universal ribosomal protein uL16 family. Component of the mitochondrial large ribosomal subunit (mt-LSU). Mature N.crassa 74S mitochondrial ribosomes consist of a small (37S) and a large (54S) subunit. The 37S small subunit contains a 16S ribosomal RNA (16S mt-rRNA) and 32 different proteins. The 54S large subunit contains a 23S rRNA (23S mt-rRNA) and 42 different proteins.

The protein localises to the mitochondrion. Functionally, component of the mitochondrial ribosome (mitoribosome), a dedicated translation machinery responsible for the synthesis of mitochondrial genome-encoded proteins, including at least some of the essential transmembrane subunits of the mitochondrial respiratory chain. The mitoribosomes are attached to the mitochondrial inner membrane and translation products are cotranslationally integrated into the membrane. This is Large ribosomal subunit protein uL16m (mrpl16) from Neurospora crassa (strain ATCC 24698 / 74-OR23-1A / CBS 708.71 / DSM 1257 / FGSC 987).